A 149-amino-acid polypeptide reads, in one-letter code: Deoxyuridine 5'-triphosphate nucleotidohydrolase (149 aa).

Substrate contacts are provided by residues Arg68–Gly70, Asn81, Leu85–Asp87, and Met95.

Belongs to the dUTPase family. It depends on Mg(2+) as a cofactor.

It carries out the reaction dUTP + H2O = dUMP + diphosphate + H(+). It functions in the pathway pyrimidine metabolism; dUMP biosynthesis; dUMP from dCTP (dUTP route): step 2/2. In terms of biological role, this enzyme is involved in nucleotide metabolism: it produces dUMP, the immediate precursor of thymidine nucleotides and it decreases the intracellular concentration of dUTP so that uracil cannot be incorporated into DNA. The polypeptide is Deoxyuridine 5'-triphosphate nucleotidohydrolase (Bordetella pertussis (strain Tohama I / ATCC BAA-589 / NCTC 13251)).